Reading from the N-terminus, the 412-residue chain is Phytoene synthase 1, chloroplastic (412 aa).

The N-terminal 129 residues, 1 to 129 (MSVALLWVVS…AYDRCGEVCA (129 aa)), are a transit peptide targeting the chloroplast.

This sequence belongs to the phytoene/squalene synthase family. As to quaternary structure, monomer. Interacts with SGR1.

Its subcellular location is the plastid. The protein localises to the chloroplast. The enzyme catalyses 2 (2E,6E,10E)-geranylgeranyl diphosphate = 15-cis-phytoene + 2 diphosphate. It participates in carotenoid biosynthesis; phytoene biosynthesis; all-trans-phytoene from geranylgeranyl diphosphate: step 1/1. Its function is as follows. Catalyzes the reaction from prephytoene diphosphate to phytoene. In Solanum lycopersicum (Tomato), this protein is Phytoene synthase 1, chloroplastic (PSY1).